The following is a 1962-amino-acid chain: Sodium channel protein type 10 subunit alpha (1962 aa).

Topologically, residues 1-125 (MEFPFGSLET…FNLIRRTAIK (125 aa)) are cytoplasmic. Residues 32–56 (QAAKKAKGKHREQKDQEEKPRPQLD) form a disordered region. Positions 33–42 (AAKKAKGKHR) are enriched in basic residues. Over residues 43–55 (EQKDQEEKPRPQL) the composition is skewed to basic and acidic residues. Residues 116-414 (FNLIRRTAIK…VTMAYEEQNQ (299 aa)) form an I repeat. The chain crosses the membrane as a helical span at residues 126–149 (VSVHSWFSLFITVTILVNCVGMTQ). The Extracellular segment spans residues 150 to 154 (TELPD). A helical membrane pass occupies residues 155 to 174 (RIEYVFTVIYTFEALIKILA). At 175 to 187 (RGFCLNEFAYLRD) the chain is on the cytoplasmic side. The helical transmembrane segment at 188–206 (PWDWLDFSVITLAYIGEAT) threads the bilayer. At 207–212 (ALRGIS) the chain is on the extracellular side. A helical; Voltage-sensor transmembrane segment spans residues 213-232 (GLRTFRVLRALKTVSVIPGL). The Cytoplasmic portion of the chain corresponds to 233–248 (KVIVGALIHSVRKLAD). Residues 249-272 (VTILTVFCLSVFALVGLQLFKGNL) traverse the membrane as a helical segment. The Extracellular segment spans residues 273-350 (KNKCVKNCAA…PDFNYTSFDS (78 aa)). C276 and C328 are joined by a disulfide. 4 N-linked (GlcNAc...) asparagine glycosylation sites follow: N284, N288, N321, and N344. The segment at residues 351 to 375 (FAWAFLSLFRLMTQDSWERLYQQTL) is an intramembrane region (pore-forming). The Extracellular segment spans residues 376 to 382 (RASGKMY). A helical transmembrane segment spans residues 383–408 (MVFFVLVIFLGSFYLVNLILAVVTMA). The Cytoplasmic segment spans residues 409 to 668 (YEEQNQATID…TWVKLKTVLF (260 aa)). A phosphoserine mark is found at S450, S453, S476, and S488. Residues 452 to 463 (HSCNGSPLPSKN) show a composition bias toward polar residues. Disordered regions lie at residues 452–493 (HSCN…PYNQ) and 521–586 (LDTS…TGEL). 2 positions are modified to phosphoserine: S621 and S624. The II repeat unit spans residues 656–920 (CCPTWVKLKT…DEDGEVNNLQ (265 aa)). The helical transmembrane segment at 669-693 (GIVTDPFAELTTTLCIVVNTVFMAM) threads the bilayer. At 694-704 (EHHGMSSAFEA) the chain is on the extracellular side. Residues 705 to 728 (MLQIGNIVFTVFFTAEMVFKIIAF) traverse the membrane as a helical segment. The Cytoplasmic portion of the chain corresponds to 729-736 (DPYYYFQK). The helical transmembrane segment at 737 to 756 (RWNIFDCIIVTVSLIELGAA) threads the bilayer. Over 757–762 (RKGSLS) the chain is Extracellular. Residues 763-782 (VLRTFRLLRVFKLAKSWPTL) traverse the membrane as a helical; Voltage-sensor segment. At 783–798 (NTLIKIIGNSVGALGN) the chain is on the cytoplasmic side. Residues 799-819 (LTIILAIIVFVFALVGKQLLG) traverse the membrane as a helical segment. Residues 820 to 843 (ENYRDNRRNISAPNEEWPRWHMHD) are Extracellular-facing. N828 carries N-linked (GlcNAc...) asparagine glycosylation. Positions 844–864 (FFHSFLIVFRILCGEWIENMW) form an intramembrane region, pore-forming. The Extracellular portion of the chain corresponds to 865 to 873 (ACMEVGQKS). The cysteines at positions 866 and 875 are disulfide-linked. A helical membrane pass occupies residues 874–899 (ICLILFLTVMVLGNLVVLNLFTALLL). The Cytoplasmic portion of the chain corresponds to 900–1154 (NSFSADNLAT…GWQVRKTCYR (255 aa)). Acidic residues predominate over residues 1015–1026 (LDDLEEDGEEDS). The disordered stretch occupies residues 1015–1035 (LDDLEEDGEEDSQSSQQEVIL). An III repeat occupies 1147–1456 (QVRKTCYRIV…KKYYNAMKKL (310 aa)). The helical transmembrane segment at 1155-1178 (IVEHSWFESFIIFMILLSSGSLAF) threads the bilayer. At 1179-1191 (EDYHLDQKPTVKA) the chain is on the extracellular side. A helical membrane pass occupies residues 1192-1217 (LLEYTDRMFTFIFVLEMLLKWVAYGF). Residues 1218-1223 (KKYFTN) lie on the Cytoplasmic side of the membrane. The helical transmembrane segment at 1224–1245 (AWCWLDFLIVNISLISLIAKIL) threads the bilayer. Topologically, residues 1246 to 1249 (QYSD) are extracellular. Residues 1250–1271 (VASIKALRTLRALRPLRALSRF) traverse the membrane as a helical; Voltage-sensor segment. The Cytoplasmic portion of the chain corresponds to 1272–1290 (EGMRVVVDALVGAIPSIMN). The chain crosses the membrane as a helical span at residues 1291-1318 (VLLVCLIFWLIFSTMGVNFFAGKFGRCI). 3 N-linked (GlcNAc...) asparagine glycosylation sites follow: N1319, N1335, and N1343. The Extracellular portion of the chain corresponds to 1319–1360 (NKTNEYFSLVPLSIVNNISDCKYQNHTGSFFWVNVKVNFDNV). Residues 1361–1382 (AMGYLALLQVATFKGWMDIMYA) constitute an intramembrane region (pore-forming). The Extracellular portion of the chain corresponds to 1383–1398 (AVDARDVNLQPKWEDN). A helical transmembrane segment spans residues 1399–1425 (VYMYLYFVIFIIFGGFFTLNLFVGVII). Residues 1426–1478 (DNFNQQKKKLGGQDIFMTEEQKKYYNAMKKLGSKKPQKPIPRPLNKYQGFVFD) are Cytoplasmic-facing. A Phosphoserine; by PKC modification is found at S1458. One copy of the IV repeat lies at 1465-1764 (IPRPLNKYQG…WEKFDPEATQ (300 aa)). The chain crosses the membrane as a helical span at residues 1479–1502 (IVTKQAFDIVIMVLICLNMITMMV). The Extracellular portion of the chain corresponds to 1503-1513 (ETDEQSAEKTK). Residues 1514–1537 (ILNKINQFFVAVFTGECVMKMFAL) form a helical membrane-spanning segment. Over 1538 to 1543 (RHYYFT) the chain is Cytoplasmic. Residues 1544-1567 (NGWNVFDFIVVVLSIGSLVFSVIL) form a helical membrane-spanning segment. The Extracellular portion of the chain corresponds to 1568–1579 (TSLENYFSPTLF). The chain crosses the membrane as a helical; Voltage-sensor span at residues 1580–1601 (RVIRLARIGRILRLIRAAKGIR). Residues 1602-1616 (TLLFALMMSLPALFN) lie on the Cytoplasmic side of the membrane. A helical transmembrane segment spans residues 1617 to 1639 (IGLLLFLVMFIYSIFGMASFPHV). Topologically, residues 1640-1653 (SWEAGIDDMFNFQT) are extracellular. Residues 1654–1676 (FANSMLCLFQITTSAGWDGLLSP) constitute an intramembrane region (pore-forming). Topologically, residues 1677–1704 (ILNTGPPYCDPNLPNSNGSRGNCGSPAV) are extracellular. N1693 carries an N-linked (GlcNAc...) asparagine glycan. The helical transmembrane segment at 1705 to 1729 (GILFFTTYIIISFLIVVNMYIAVIL) threads the bilayer. The Cytoplasmic portion of the chain corresponds to 1730–1962 (ENFNVATQES…TSKKVTAPGP (233 aa)). An IQ domain is found at 1858–1887 (EDISATVIQKAYRSYVLHRSMTISNPPAVP). The disordered stretch occupies residues 1914–1962 (KSETASAASFPPSYDSVTRGLSDQINMSTSSSMQNEDEGTSKKVTAPGP). Over residues 1928 to 1947 (DSVTRGLSDQINMSTSSSMQ) the composition is skewed to polar residues.

It belongs to the sodium channel (TC 1.A.1.10) family. Nav1.8/SCN10A subfamily. In terms of assembly, the channel consists of an ion conducting pore forming alpha-subunit regulated by one or more associated auxiliary subunits SCN1B, SCN2B and SCN3B; electrophysiological properties may vary depending on the type of the associated beta subunits. Found in a number of complexes with PRX, DYNLT1 and PDZD2. Interacts with proteins such as FSTL1, PRX, DYNLT1, PDZD2, S100A10 and many others. Interacts with NEDD4 and NEDD4L. Ubiquitinated by NEDD4L; which promotes its endocytosis. Post-translationally, phosphorylation at Ser-1458 by PKC in a highly conserved cytoplasmic loop slows inactivation of the sodium channel and reduces peak sodium currents. In terms of processing, lacks the cysteine which covalently binds the conotoxin GVIIJ. This cysteine (position 825) is speculated in other sodium channel subunits alpha to be implied in covalent binding with the sodium channel subunit beta-2 or beta-4. As to expression, expressed in nodose ganglia, but not in cortex, hippocampus, cerebellum, liver, heart and skeletal muscle.

Its subcellular location is the cell membrane. The catalysed reaction is Na(+)(in) = Na(+)(out). Tetrodotoxin-resistant channel that mediates the voltage-dependent sodium ion permeability of excitable membranes. Assuming opened or closed conformations in response to the voltage difference across the membrane, the protein forms a sodium-selective channel through which sodium ions may pass in accordance with their electrochemical gradient. Plays a role in neuropathic pain mechanisms. The chain is Sodium channel protein type 10 subunit alpha (SCN10A) from Canis lupus familiaris (Dog).